An 83-amino-acid polypeptide reads, in one-letter code: MALLDFFLSRNKNTANVAKERLQIIVAEQRKYNNEPDYFPQLKREILSVICKYVNIEPNMVTVQLDQKKEDISILELNIILPD.

The protein belongs to the MinE family.

Its function is as follows. Prevents the cell division inhibition by proteins MinC and MinD at internal division sites while permitting inhibition at polar sites. This ensures cell division at the proper site by restricting the formation of a division septum at the midpoint of the long axis of the cell. This chain is Cell division topological specificity factor, found in Buchnera aphidicola subsp. Acyrthosiphon pisum (strain 5A).